The chain runs to 342 residues: Platelet-activating factor receptor (342 aa).

Over 1 to 16 (MEPNNSFRVDSEFRYT) the chain is Extracellular. The N-linked (GlcNAc...) asparagine glycan is linked to Asn-4. Residues 17–38 (LFPIFYSIVFVLGVIANSYVLW) traverse the membrane as a helical segment. Topologically, residues 39–54 (VFARLYPSKKFNEIKI) are cytoplasmic. The helical transmembrane segment at 55 to 74 (FMVNLTMADLLFLVTLPLWI) threads the bilayer. Over 75–91 (VYYYNQGDWILPKFLCN) the chain is Extracellular. A disulfide bridge connects residues Cys-90 and Cys-173. Residues 92 to 113 (LAGCFFFINTYCSVAFLAVITY) form a helical membrane-spanning segment. Over 114–133 (NRFQAVTRPIKTAQATTRKR) the chain is Cytoplasmic. A helical transmembrane segment spans residues 134–155 (GFLLSLIIWVSIVGAASYFFVL). The Extracellular segment spans residues 156–184 (DSTNSEPKKTGSGNITRCFEHYEKGSIPV). N-linked (GlcNAc...) asparagine glycosylation occurs at Asn-169. The chain crosses the membrane as a helical span at residues 185–205 (LIIHIFLVFSFFLVFLIILFC). Residues 206-233 (NLVIIRTLLTQQVQMQRNAEVKRRALWM) lie on the Cytoplasmic side of the membrane. Residues 234-254 (VCTVLAVFVICFVPHHLVQLP) form a helical membrane-spanning segment. The Extracellular segment spans residues 255–276 (WTLAELGFQDTDFHQGINDAHQ). A helical transmembrane segment spans residues 277-296 (VTLCLLSTNCVLDPIIYCFL). Residues 297–342 (TKKFRKHLTEKLYSMRESRKCSRATSETGTEVVVQLKDAPIKSLKY) are Cytoplasmic-facing.

Belongs to the G-protein coupled receptor 1 family. In terms of assembly, interacts with ARRB1.

It is found in the cell membrane. Its function is as follows. Receptor for platelet activating factor, a chemotactic phospholipid mediator that possesses potent inflammatory, smooth-muscle contractile and hypotensive activity. Seems to mediate its action via a G protein that activates a phosphatidylinositol-calcium second messenger system. The sequence is that of Platelet-activating factor receptor from Capra hircus (Goat).